Consider the following 207-residue polypeptide: Fibroblast growth factor 18 (207 aa).

The N-terminal stretch at 1-27 (MYSAPSACTCLCLHFLLLCFQVQVLVA) is a signal peptide. N39 carries N-linked (GlcNAc...) asparagine glycosylation. An intrachain disulfide couples C109 to C127. The N-linked (GlcNAc...) asparagine glycan is linked to N137. Positions 157 to 186 (GRPRKGPKTRENQQDVHFMKRYPKGQPELQ) are disordered. Residues 164 to 174 (KTRENQQDVHF) show a composition bias toward basic and acidic residues.

Belongs to the heparin-binding growth factors family. In terms of assembly, interacts with FGFR3 and FGFR4.

The protein localises to the secreted. Its function is as follows. Plays an important role in the regulation of cell proliferation, cell differentiation and cell migration. Required for normal ossification and bone development. Stimulates hepatic and intestinal proliferation. The sequence is that of Fibroblast growth factor 18 (FGF18) from Homo sapiens (Human).